The primary structure comprises 207 residues: Peptidyl-tRNA hydrolase (207 aa).

Position 14 (tyrosine 14) interacts with tRNA. The active-site Proton acceptor is the histidine 19. TRNA contacts are provided by phenylalanine 68, asparagine 70, and asparagine 116.

Belongs to the PTH family. As to quaternary structure, monomer.

Its subcellular location is the cytoplasm. The catalysed reaction is an N-acyl-L-alpha-aminoacyl-tRNA + H2O = an N-acyl-L-amino acid + a tRNA + H(+). In terms of biological role, hydrolyzes ribosome-free peptidyl-tRNAs (with 1 or more amino acids incorporated), which drop off the ribosome during protein synthesis, or as a result of ribosome stalling. Functionally, catalyzes the release of premature peptidyl moieties from peptidyl-tRNA molecules trapped in stalled 50S ribosomal subunits, and thus maintains levels of free tRNAs and 50S ribosomes. In Hyphomonas neptunium (strain ATCC 15444), this protein is Peptidyl-tRNA hydrolase.